Consider the following 304-residue polypeptide: Pyridoxal 5'-phosphate synthase subunit PdxS (304 aa).

D-ribose 5-phosphate is bound at residue aspartate 34. The active-site Schiff-base intermediate with D-ribose 5-phosphate is the lysine 91. Glycine 163 lines the D-ribose 5-phosphate pocket. A D-glyceraldehyde 3-phosphate-binding site is contributed by arginine 175. Residues glycine 224 and 245–246 (GS) contribute to the D-ribose 5-phosphate site.

It belongs to the PdxS/SNZ family. As to quaternary structure, in the presence of PdxT, forms a dodecamer of heterodimers.

It catalyses the reaction aldehydo-D-ribose 5-phosphate + D-glyceraldehyde 3-phosphate + L-glutamine = pyridoxal 5'-phosphate + L-glutamate + phosphate + 3 H2O + H(+). It functions in the pathway cofactor biosynthesis; pyridoxal 5'-phosphate biosynthesis. In terms of biological role, catalyzes the formation of pyridoxal 5'-phosphate from ribose 5-phosphate (RBP), glyceraldehyde 3-phosphate (G3P) and ammonia. The ammonia is provided by the PdxT subunit. Can also use ribulose 5-phosphate and dihydroxyacetone phosphate as substrates, resulting from enzyme-catalyzed isomerization of RBP and G3P, respectively. In Cutibacterium acnes (strain DSM 16379 / KPA171202) (Propionibacterium acnes), this protein is Pyridoxal 5'-phosphate synthase subunit PdxS.